The chain runs to 233 residues: Large ribosomal subunit protein uL1 (233 aa).

The protein belongs to the universal ribosomal protein uL1 family. In terms of assembly, part of the 50S ribosomal subunit.

Binds directly to 23S rRNA. The L1 stalk is quite mobile in the ribosome, and is involved in E site tRNA release. Its function is as follows. Protein L1 is also a translational repressor protein, it controls the translation of the L11 operon by binding to its mRNA. This is Large ribosomal subunit protein uL1 from Shewanella oneidensis (strain ATCC 700550 / JCM 31522 / CIP 106686 / LMG 19005 / NCIMB 14063 / MR-1).